Consider the following 359-residue polypeptide: S-adenosylmethionine:tRNA ribosyltransferase-isomerase (359 aa).

Belongs to the QueA family. As to quaternary structure, monomer.

It is found in the cytoplasm. It catalyses the reaction 7-aminomethyl-7-carbaguanosine(34) in tRNA + S-adenosyl-L-methionine = epoxyqueuosine(34) in tRNA + adenine + L-methionine + 2 H(+). The protein operates within tRNA modification; tRNA-queuosine biosynthesis. Functionally, transfers and isomerizes the ribose moiety from AdoMet to the 7-aminomethyl group of 7-deazaguanine (preQ1-tRNA) to give epoxyqueuosine (oQ-tRNA). The protein is S-adenosylmethionine:tRNA ribosyltransferase-isomerase of Synechococcus sp. (strain ATCC 27144 / PCC 6301 / SAUG 1402/1) (Anacystis nidulans).